The sequence spans 475 residues: Dihydrolipoyl dehydrogenase (475 aa).

Residues 36–45 (ERYSTLGGVC), Lys-54, and Gly-117 contribute to the FAD site. Cys-45 and Cys-50 are joined by a disulfide. NAD(+) contacts are provided by residues 182–186 (GGGII), Glu-205, Val-238, and 270–273 (AIGR). Residues Asp-313 and Ala-321 each coordinate FAD. His-445 serves as the catalytic Proton acceptor.

Belongs to the class-I pyridine nucleotide-disulfide oxidoreductase family. FAD serves as cofactor.

The protein localises to the cytoplasm. It carries out the reaction N(6)-[(R)-dihydrolipoyl]-L-lysyl-[protein] + NAD(+) = N(6)-[(R)-lipoyl]-L-lysyl-[protein] + NADH + H(+). In terms of biological role, the branched-chain alpha-keto dehydrogenase complex catalyzes the overall conversion of alpha-keto acids to acyl-CoA and CO(2). It contains multiple copies of 3 enzymatic components: branched-chain alpha-keto acid decarboxylase (E1), lipoamide acyltransferase (E2) and lipoamide dehydrogenase (E3). The polypeptide is Dihydrolipoyl dehydrogenase (lpd) (Vibrio parahaemolyticus serotype O3:K6 (strain RIMD 2210633)).